A 182-amino-acid chain; its full sequence is Small ribosomal subunit protein uS4c (182 aa).

In terms of domain architecture, S4 RNA-binding spans 82 to 143 (MRLDNILFRL…KQRSKALIQN (62 aa)).

The protein belongs to the universal ribosomal protein uS4 family. Part of the 30S ribosomal subunit. Contacts protein S5. The interaction surface between S4 and S5 is involved in control of translational fidelity.

It is found in the plastid. The protein resides in the chloroplast. One of the primary rRNA binding proteins, it binds directly to 16S rRNA where it nucleates assembly of the body of the 30S subunit. Functionally, with S5 and S12 plays an important role in translational accuracy. The sequence is that of Small ribosomal subunit protein uS4c (rps4) from Iris domestica (Leopard lily).